We begin with the raw amino-acid sequence, 288 residues long: UPF0276 protein VP3015 (288 aa).

It belongs to the UPF0276 family.

The chain is UPF0276 protein VP3015 from Vibrio parahaemolyticus serotype O3:K6 (strain RIMD 2210633).